A 238-amino-acid polypeptide reads, in one-letter code: Cysteine-rich venom protein (238 aa).

The N-terminal stretch at 1-19 (MIAFIVLLSLAAVLQQSSG) is a signal peptide. The region spanning 38-164 (VDKHNALRRS…STKYLYVCQY (127 aa)) is the SCP domain. Disulfide bonds link cysteine 75–cysteine 153, cysteine 92–cysteine 165, cysteine 148–cysteine 162, cysteine 184–cysteine 191, cysteine 187–cysteine 196, cysteine 200–cysteine 233, cysteine 209–cysteine 227, and cysteine 218–cysteine 231. Residues 200 to 233 (CKYEDAFTNCNELAKETKCKTEWIKSKCPATCFC) form the ShKT domain.

It belongs to the CRISP family. In terms of tissue distribution, expressed by the venom gland.

The protein resides in the secreted. Blocks olfactory (CNGA2) and retinal (CNGA1) CNG channel currents. Does not affect neither depolarization- nor caffeine-induced contraction of smooth muscle. The polypeptide is Cysteine-rich venom protein (Drysdalia coronoides (White-lipped snake)).